The sequence spans 200 residues: ATP-dependent Clp protease proteolytic subunit 2 (200 aa).

Ser96 (nucleophile) is an active-site residue. His121 is a catalytic residue.

It belongs to the peptidase S14 family. Fourteen ClpP subunits assemble into 2 heptameric rings which stack back to back to give a disk-like structure with a central cavity, resembling the structure of eukaryotic proteasomes.

Its subcellular location is the cytoplasm. The enzyme catalyses Hydrolysis of proteins to small peptides in the presence of ATP and magnesium. alpha-casein is the usual test substrate. In the absence of ATP, only oligopeptides shorter than five residues are hydrolyzed (such as succinyl-Leu-Tyr-|-NHMec, and Leu-Tyr-Leu-|-Tyr-Trp, in which cleavage of the -Tyr-|-Leu- and -Tyr-|-Trp bonds also occurs).. Functionally, cleaves peptides in various proteins in a process that requires ATP hydrolysis. Has a chymotrypsin-like activity. Plays a major role in the degradation of misfolded proteins. This Synechococcus sp. (strain JA-2-3B'a(2-13)) (Cyanobacteria bacterium Yellowstone B-Prime) protein is ATP-dependent Clp protease proteolytic subunit 2.